We begin with the raw amino-acid sequence, 123 residues long: Modulator protein MzrA (123 aa).

Over 1–8 the chain is Cytoplasmic; the sequence is MIKRPRWQ. Residues 9-29 form a helical membrane-spanning segment; that stretch reads YVLLIALALLALATLLVPCMV. Residues 30-123 are Periplasmic-facing; it reads RTESELRIRA…EFARAPLNLG (94 aa).

The protein belongs to the MzrA family. Interacts with EnvZ.

It is found in the cell inner membrane. Modulates the activity of the EnvZ/OmpR two-component regulatory system, probably by directly modulating EnvZ enzymatic activity and increasing stability of phosphorylated OmpR. In Serratia proteamaculans (strain 568), this protein is Modulator protein MzrA.